The sequence spans 397 residues: Protein-glutamate methylesterase/protein-glutamine glutaminase of group 2 operon (397 aa).

The Response regulatory domain occupies 21–139 (RVMIVDDSVV…EASAADTFHH (119 aa)). D72 carries the post-translational modification 4-aspartylphosphate. Positions 199–388 (PFSTLAPKVL…LPLNQIGAKV (190 aa)) constitute a CheB-type methylesterase domain. Active-site residues include S213, H241, and D337.

This sequence belongs to the CheB family. Post-translationally, phosphorylated by CheA. Phosphorylation of the N-terminal regulatory domain activates the methylesterase activity.

The protein localises to the cytoplasm. It carries out the reaction [protein]-L-glutamate 5-O-methyl ester + H2O = L-glutamyl-[protein] + methanol + H(+). The catalysed reaction is L-glutaminyl-[protein] + H2O = L-glutamyl-[protein] + NH4(+). Functionally, involved in chemotaxis. Part of a chemotaxis signal transduction system that modulates chemotaxis in response to various stimuli. Catalyzes the demethylation of specific methylglutamate residues introduced into the chemoreceptors (methyl-accepting chemotaxis proteins or MCP) by CheR. Also mediates the irreversible deamidation of specific glutamine residues to glutamic acid. In Bradyrhizobium diazoefficiens (strain JCM 10833 / BCRC 13528 / IAM 13628 / NBRC 14792 / USDA 110), this protein is Protein-glutamate methylesterase/protein-glutamine glutaminase of group 2 operon.